A 472-amino-acid chain; its full sequence is tRNA-2-methylthio-N(6)-dimethylallyladenosine synthase (472 aa).

The 121-residue stretch at 22-142 (RKVFVKTYGC…LPDALKRARA (121 aa)) folds into the MTTase N-terminal domain. The [4Fe-4S] cluster site is built by C31, C67, C105, C183, C187, and C190. One can recognise a Radical SAM core domain in the interval 169–403 (RARGVTAFLT…LLVKQQRGFA (235 aa)). Residues 404–466 (EACVGREIDL…PNSLFAEMIG (63 aa)) form the TRAM domain.

Belongs to the methylthiotransferase family. MiaB subfamily. In terms of assembly, monomer. The cofactor is [4Fe-4S] cluster.

The protein resides in the cytoplasm. The catalysed reaction is N(6)-dimethylallyladenosine(37) in tRNA + (sulfur carrier)-SH + AH2 + 2 S-adenosyl-L-methionine = 2-methylsulfanyl-N(6)-dimethylallyladenosine(37) in tRNA + (sulfur carrier)-H + 5'-deoxyadenosine + L-methionine + A + S-adenosyl-L-homocysteine + 2 H(+). Catalyzes the methylthiolation of N6-(dimethylallyl)adenosine (i(6)A), leading to the formation of 2-methylthio-N6-(dimethylallyl)adenosine (ms(2)i(6)A) at position 37 in tRNAs that read codons beginning with uridine. The sequence is that of tRNA-2-methylthio-N(6)-dimethylallyladenosine synthase from Rhizobium meliloti (strain 1021) (Ensifer meliloti).